The primary structure comprises 456 residues: MGAVLGACTAASCAANLACCCGSAACSLCCNFCPTCKNSTSTRIVYSIFLLFGLVVSCIVLAPGIRHKLNQIPYLCEHASETCDSIVGYLAVYRVCFGLAAFFLLFCLLMYGVTSSRDVRSKIQNGFWGIKILLFLGAIVAAFFIPQGKFSEVWMYFGLIGSFLFILIQLVLLVDFAHTWNSSWVGRMEESGSKVWAVLLLCATFLMYGFCVAGIVCLYVYFTYSQESSCHTNKFFISFNLILCIIASVLAIHPKVQERLPTSGLLQASVISLYTVYLTWSALSFQPDKNCNGFYETHITLAGMDSQAIIGVILMFVMVVYASVRTASSSQVGKLGMSSPKHSSALDKETTVLSEGDETRSDVGLVEEGGEGRRVYDDEDGGVAYSYSFYHFMLMLASLYIMMTLTNWYKPVGSDFSKLQYSETAVWVKIASSWLCQLIYIWTLLAPALFPDRDFS.

11 consecutive transmembrane segments (helical) span residues alanine 10–phenylalanine 32, isoleucine 44–glycine 64, valine 95–serine 115, glycine 126–proline 146, valine 153–leucine 173, valine 195–isoleucine 215, lysine 234–proline 254, leucine 265–phenylalanine 285, leucine 301–tyrosine 321, valine 383–methionine 403, and isoleucine 430–phenylalanine 450.

It belongs to the TDE1 family.

Its subcellular location is the endoplasmic reticulum membrane. In terms of biological role, enhances the incorporation of serine into phosphatidylserine and sphingolipids. The protein is Probable serine incorporator (serinc) of Nematostella vectensis (Starlet sea anemone).